Consider the following 211-residue polypeptide: Transcription antitermination protein NusB (211 aa).

The protein belongs to the NusB family.

Involved in transcription antitermination. Required for transcription of ribosomal RNA (rRNA) genes. Binds specifically to the boxA antiterminator sequence of the ribosomal RNA (rrn) operons. This Trichormus variabilis (strain ATCC 29413 / PCC 7937) (Anabaena variabilis) protein is Transcription antitermination protein NusB.